A 182-amino-acid chain; its full sequence is Small ribosomal subunit protein uS4c (182 aa).

The S4 RNA-binding domain occupies 82–143 (MRLDNILFRL…KERSKVLIQN (62 aa)).

Belongs to the universal ribosomal protein uS4 family. As to quaternary structure, part of the 30S ribosomal subunit. Contacts protein S5. The interaction surface between S4 and S5 is involved in control of translational fidelity.

The protein resides in the plastid. The protein localises to the chloroplast. In terms of biological role, one of the primary rRNA binding proteins, it binds directly to 16S rRNA where it nucleates assembly of the body of the 30S subunit. Functionally, with S5 and S12 plays an important role in translational accuracy. In Alophia veracruzana (Mexican pine woods lily), this protein is Small ribosomal subunit protein uS4c (rps4).